Reading from the N-terminus, the 542-residue chain is Chaperonin GroEL (542 aa).

ATP contacts are provided by residues 29-32 (TLGP), 86-90 (DGTTT), Gly-413, and Asp-494.

It belongs to the chaperonin (HSP60) family. Forms a cylinder of 14 subunits composed of two heptameric rings stacked back-to-back. Interacts with the co-chaperonin GroES.

It is found in the cytoplasm. The catalysed reaction is ATP + H2O + a folded polypeptide = ADP + phosphate + an unfolded polypeptide.. Its function is as follows. Together with its co-chaperonin GroES, plays an essential role in assisting protein folding. The GroEL-GroES system forms a nano-cage that allows encapsulation of the non-native substrate proteins and provides a physical environment optimized to promote and accelerate protein folding. This is Chaperonin GroEL from Endomicrobium trichonymphae.